Here is a 459-residue protein sequence, read N- to C-terminus: Cysteine--tRNA ligase (459 aa).

C28 serves as a coordination point for Zn(2+). The short motif at 30–40 (VTIYDLCHIGH) is the 'HIGH' region element. 3 residues coordinate Zn(2+): C209, H234, and E238. Positions 266–270 (KMSKS) match the 'KMSKS' region motif. K269 contributes to the ATP binding site.

Belongs to the class-I aminoacyl-tRNA synthetase family. Monomer. The cofactor is Zn(2+).

It is found in the cytoplasm. The enzyme catalyses tRNA(Cys) + L-cysteine + ATP = L-cysteinyl-tRNA(Cys) + AMP + diphosphate. This Shewanella baltica (strain OS195) protein is Cysteine--tRNA ligase.